Here is a 272-residue protein sequence, read N- to C-terminus: Pyrroline-5-carboxylate reductase (272 aa).

It belongs to the pyrroline-5-carboxylate reductase family.

The protein resides in the cytoplasm. It catalyses the reaction L-proline + NADP(+) = (S)-1-pyrroline-5-carboxylate + NADPH + 2 H(+). It carries out the reaction L-proline + NAD(+) = (S)-1-pyrroline-5-carboxylate + NADH + 2 H(+). It participates in amino-acid biosynthesis; L-proline biosynthesis; L-proline from L-glutamate 5-semialdehyde: step 1/1. Catalyzes the reduction of 1-pyrroline-5-carboxylate (PCA) to L-proline. In Vibrio alginolyticus, this protein is Pyrroline-5-carboxylate reductase.